The primary structure comprises 294 residues: 4-hydroxy-tetrahydrodipicolinate synthase (294 aa).

Residue Thr-47 coordinates pyruvate. Catalysis depends on Tyr-135, which acts as the Proton donor/acceptor. Lys-164 serves as the catalytic Schiff-base intermediate with substrate. Val-206 provides a ligand contact to pyruvate.

It belongs to the DapA family. Homotetramer; dimer of dimers.

It is found in the cytoplasm. It carries out the reaction L-aspartate 4-semialdehyde + pyruvate = (2S,4S)-4-hydroxy-2,3,4,5-tetrahydrodipicolinate + H2O + H(+). The protein operates within amino-acid biosynthesis; L-lysine biosynthesis via DAP pathway; (S)-tetrahydrodipicolinate from L-aspartate: step 3/4. Functionally, catalyzes the condensation of (S)-aspartate-beta-semialdehyde [(S)-ASA] and pyruvate to 4-hydroxy-tetrahydrodipicolinate (HTPA). The sequence is that of 4-hydroxy-tetrahydrodipicolinate synthase from Lachnoclostridium phytofermentans (strain ATCC 700394 / DSM 18823 / ISDg) (Clostridium phytofermentans).